An 82-amino-acid chain; its full sequence is Turripeptide Gdm9.1 (82 aa).

A signal peptide spans 1–23 (MMAKLMITVMMVLLLSLQQGADG). Residues 24–46 (RSERWRKNQMAASRIMRNLITAR) constitute a propeptide that is removed on maturation. Residues P49 and P50 each carry the 4-hydroxyproline modification. Disulfide bonds link C53–C68, C58–C72, and C64–C79. E60 and E63 each carry 4-carboxyglutamate.

It belongs to the Pg turripeptide superfamily. Expressed by the venom duct.

It is found in the secreted. This chain is Turripeptide Gdm9.1, found in Gemmula diomedea (Gem-turris).